The following is a 706-amino-acid chain: Vitamin B12-dependent ribonucleoside-diphosphate reductase (706 aa).

Positions 21–109 (AKVRRRDGTL…IYRQRRAELR (89 aa)) constitute an ATP-cone domain. Residues Ser191, 206-207 (GC), Gly235, 389-393 (NPCGE), and 534-538 (PTGTI) contribute to the substrate site. An intrachain disulfide couples Cys207 to Cys402. Asn389 (proton acceptor) is an active-site residue. The Cysteine radical intermediate role is filled by Cys391. Glu393 (proton acceptor) is an active-site residue.

The protein belongs to the ribonucleoside diphosphate reductase class-2 family. It depends on adenosylcob(III)alamin as a cofactor.

The catalysed reaction is a 2'-deoxyribonucleoside 5'-diphosphate + [thioredoxin]-disulfide + H2O = a ribonucleoside 5'-diphosphate + [thioredoxin]-dithiol. Functionally, provides the precursors necessary for DNA synthesis. Catalyzes the biosynthesis of deoxyribonucleotides from the corresponding ribonucleotides. The polypeptide is Vitamin B12-dependent ribonucleoside-diphosphate reductase (nrdZ) (Mycobacterium tuberculosis (strain ATCC 25618 / H37Rv)).